The following is a 182-amino-acid chain: Adenylate kinase (182 aa).

Position 12-17 (12-17) interacts with ATP; it reads GAGKGT. An NMP region spans residues 32–61; that stretch reads STGDLLRAEVGAKTPLGQEAAAVMNRGELV. Residues T33, R38, 59–61, 85–88, and Q92 each bind AMP; these read ELV and GFPR. An LID region spans residues 126–132; that stretch reads SRGRSDD. R127 is an ATP binding site. AMP contacts are provided by R129 and R140. G168 is an ATP binding site.

Belongs to the adenylate kinase family. As to quaternary structure, monomer.

The protein resides in the cytoplasm. It carries out the reaction AMP + ATP = 2 ADP. Its pathway is purine metabolism; AMP biosynthesis via salvage pathway; AMP from ADP: step 1/1. Catalyzes the reversible transfer of the terminal phosphate group between ATP and AMP. Plays an important role in cellular energy homeostasis and in adenine nucleotide metabolism. The protein is Adenylate kinase of Prochlorococcus marinus (strain MIT 9303).